A 515-amino-acid polypeptide reads, in one-letter code: Zinc metalloproteinase-disintegrin-like EoMP06 (515 aa).

Positions 1 to 94 (VEDHCYYHGR…TLGLIVPPHG (94 aa)) are excised as a propeptide. Q95 is modified (pyrrolidone carboxylic acid). Positions 100–296 (KFIELIIVVD…YNPKCIVDPP (197 aa)) constitute a Peptidase M12B domain. E103 lines the Ca(2+) pocket. A glycan (N-linked (GlcNAc...) asparagine) is linked at N160. Residue D187 participates in Ca(2+) binding. 2 N-linked (GlcNAc...) asparagine glycosylation sites follow: N194 and N225. Intrachain disulfides connect C211–C291, C251–C275, and C253–C258. H236 contributes to the Zn(2+) binding site. E237 is a catalytic residue. The Zn(2+) site is built by H240 and H246. Ca(2+) contacts are provided by C291, V306, N309, V311, E313, E316, and D319. The Disintegrin domain maps to 304-390 (PAVCGNGVWE…ECPRNEFQRN (87 aa)). Disulfide bonds link C307–C336, C318–C331, C320–C326, C330–C353, C344–C350, C349–C375, C362–C382, C369–C401, C394–C406, C413–C466, C428–C477, C441–C454, C461–C503, and C497–C508. The D/ECD-tripeptide signature appears at 368–370 (DCD). Ca(2+)-binding residues include D370, V371, and N385.

It belongs to the venom metalloproteinase (M12B) family. P-III subfamily. P-IIIa sub-subfamily. Monomer. It depends on Zn(2+) as a cofactor. Expressed by the venom gland.

The protein resides in the secreted. Snake venom zinc metalloproteinase that catalyzes the conversion of prothrombin (F2) to alpha-thrombin through formation of a thrombin intermediate, thereby functioning as a procoagulant protein. The protein is Zinc metalloproteinase-disintegrin-like EoMP06 of Echis ocellatus (Ocellated saw-scaled viper).